The sequence spans 321 residues: Lipoyl synthase (321 aa).

7 residues coordinate [4Fe-4S] cluster: Cys68, Cys73, Cys79, Cys94, Cys98, Cys101, and Ser308. The Radical SAM core domain maps to 80–297 (FNHGTATFMI…KAEALAMGFT (218 aa)).

Belongs to the radical SAM superfamily. Lipoyl synthase family. Requires [4Fe-4S] cluster as cofactor.

The protein localises to the cytoplasm. It catalyses the reaction [[Fe-S] cluster scaffold protein carrying a second [4Fe-4S](2+) cluster] + N(6)-octanoyl-L-lysyl-[protein] + 2 oxidized [2Fe-2S]-[ferredoxin] + 2 S-adenosyl-L-methionine + 4 H(+) = [[Fe-S] cluster scaffold protein] + N(6)-[(R)-dihydrolipoyl]-L-lysyl-[protein] + 4 Fe(3+) + 2 hydrogen sulfide + 2 5'-deoxyadenosine + 2 L-methionine + 2 reduced [2Fe-2S]-[ferredoxin]. It participates in protein modification; protein lipoylation via endogenous pathway; protein N(6)-(lipoyl)lysine from octanoyl-[acyl-carrier-protein]: step 2/2. Its function is as follows. Catalyzes the radical-mediated insertion of two sulfur atoms into the C-6 and C-8 positions of the octanoyl moiety bound to the lipoyl domains of lipoate-dependent enzymes, thereby converting the octanoylated domains into lipoylated derivatives. The polypeptide is Lipoyl synthase (Salmonella paratyphi A (strain AKU_12601)).